We begin with the raw amino-acid sequence, 366 residues long: NADH-quinone oxidoreductase subunit D (366 aa).

Belongs to the complex I 49 kDa subunit family. NDH-1 is composed of 14 different subunits. Subunits NuoB, C, D, E, F, and G constitute the peripheral sector of the complex.

It is found in the cell membrane. The enzyme catalyses a quinone + NADH + 5 H(+)(in) = a quinol + NAD(+) + 4 H(+)(out). In terms of biological role, NDH-1 shuttles electrons from NADH, via FMN and iron-sulfur (Fe-S) centers, to quinones in the respiratory chain. The immediate electron acceptor for the enzyme in this species is believed to be a menaquinone. Couples the redox reaction to proton translocation (for every two electrons transferred, four hydrogen ions are translocated across the cytoplasmic membrane), and thus conserves the redox energy in a proton gradient. The sequence is that of NADH-quinone oxidoreductase subunit D from Bacillus cereus (strain ATCC 14579 / DSM 31 / CCUG 7414 / JCM 2152 / NBRC 15305 / NCIMB 9373 / NCTC 2599 / NRRL B-3711).